The sequence spans 507 residues: ATP synthase subunit alpha (507 aa).

ATP is bound at residue 168–175; sequence GDRQTGKT.

The protein belongs to the ATPase alpha/beta chains family. As to quaternary structure, F-type ATPases have 2 components, CF(1) - the catalytic core - and CF(0) - the membrane proton channel. CF(1) has five subunits: alpha(3), beta(3), gamma(1), delta(1), epsilon(1). CF(0) has three main subunits: a(1), b(2) and c(9-12). The alpha and beta chains form an alternating ring which encloses part of the gamma chain. CF(1) is attached to CF(0) by a central stalk formed by the gamma and epsilon chains, while a peripheral stalk is formed by the delta and b chains.

It is found in the cell membrane. It catalyses the reaction ATP + H2O + 4 H(+)(in) = ADP + phosphate + 5 H(+)(out). Produces ATP from ADP in the presence of a proton gradient across the membrane. The alpha chain is a regulatory subunit. The sequence is that of ATP synthase subunit alpha from Mesomycoplasma hyopneumoniae (strain 232) (Mycoplasma hyopneumoniae).